A 253-amino-acid chain; its full sequence is Phosphate import ATP-binding protein PstB (253 aa).

One can recognise an ABC transporter domain in the interval 1-249 (MKLMDVRVSG…PRHELTKKFL (249 aa)). 38–45 (GPSGSGKS) lines the ATP pocket.

This sequence belongs to the ABC transporter superfamily. Phosphate importer (TC 3.A.1.7) family. The complex is composed of two ATP-binding proteins (PstB), two transmembrane proteins (PstC and PstA) and a solute-binding protein (PstS).

The protein resides in the cell membrane. It catalyses the reaction phosphate(out) + ATP + H2O = ADP + 2 phosphate(in) + H(+). Functionally, part of the ABC transporter complex PstSACB involved in phosphate import. Responsible for energy coupling to the transport system. The chain is Phosphate import ATP-binding protein PstB from Aeropyrum pernix (strain ATCC 700893 / DSM 11879 / JCM 9820 / NBRC 100138 / K1).